The sequence spans 345 residues: Glycerol-3-phosphate dehydrogenase [NAD(P)+] (345 aa).

Residues serine 11, tryptophan 12, histidine 32, arginine 33, and lysine 106 each coordinate NADPH. Sn-glycerol 3-phosphate-binding residues include lysine 106, glycine 137, and serine 139. NADPH is bound at residue alanine 141. Sn-glycerol 3-phosphate is bound by residues lysine 192, aspartate 245, serine 255, arginine 256, and asparagine 257. Lysine 192 (proton acceptor) is an active-site residue. Arginine 256 is an NADPH binding site. NADPH-binding residues include valine 280 and glutamate 282.

Belongs to the NAD-dependent glycerol-3-phosphate dehydrogenase family.

Its subcellular location is the cytoplasm. It carries out the reaction sn-glycerol 3-phosphate + NAD(+) = dihydroxyacetone phosphate + NADH + H(+). It catalyses the reaction sn-glycerol 3-phosphate + NADP(+) = dihydroxyacetone phosphate + NADPH + H(+). It participates in membrane lipid metabolism; glycerophospholipid metabolism. Functionally, catalyzes the reduction of the glycolytic intermediate dihydroxyacetone phosphate (DHAP) to sn-glycerol 3-phosphate (G3P), the key precursor for phospholipid synthesis. This Bacillus pumilus (strain SAFR-032) protein is Glycerol-3-phosphate dehydrogenase [NAD(P)+].